The following is a 332-amino-acid chain: PRKC apoptosis WT1 regulator protein (332 aa).

Composition is skewed to polar residues over residues 1-14 (MATG…STTD) and 52-62 (AQTTAAGTSEL). The segment at 1–253 (MATGGYRSSG…HNRDTSAPAN (253 aa)) is disordered. A B30.2/SPRY domain-binding motif motif is present at residues 61-65 (ELNHG). Low complexity predominate over residues 65–79 (GPAGAAAPAAPGPGA). The short motif at 137–153 (RKGKGQIEKRKLREKRR) is the Nuclear localization signal element. Residues 137 to 195 (RKGKGQIEKRKLREKRRSTGVVNIPAAECLDEYEDDEAGQKERKREDAITQQNTIQNEA) form a selective for apoptosis induction in cancer cells (SAC) region. Position 155 is a phosphothreonine; by PKA (Thr-155). Over residues 174-184 (AGQKERKREDA) the composition is skewed to basic and acidic residues. The stretch at 176 to 198 (QKERKREDAITQQNTIQNEAASL) forms a coiled coil. Residues 185 to 195 (ITQQNTIQNEA) are compositionally biased toward polar residues. Ser-223 is modified (phosphoserine). A compositionally biased stretch (basic and acidic residues) spans 234 to 247 (PRTDRSGFSRHNRD). Residues 292-332 (IGKLKEEIDLLNRDLDDMEDENEQLKQENKTLLKVVGQLTR) form a leucine-zipper region.

In terms of assembly, homooligomer. Interacts (via the C-terminal region) with WT1. Interacts with THAP1. Interacts with AATF. Interacts with BACE1. Interacts with SPSB1 (via B30.2/SPRY domain); this interaction is direct and occurs in association with the Elongin BC complex. Interacts with SPSB2 (via B30.2/SPRY domain); this interaction occurs in association with the Elongin BC complex. Interacts with SPSB4 (via B30.2/SPRY domain); this interaction occurs in association with the Elongin BC complex. Component of a ternary complex composed of SQSTM1 and PRKCZ. Interacts with actin. Post-translationally, preferentially phosphorylated at the Thr-155 by PKC in cancer cells.

It localises to the cytoplasm. The protein localises to the nucleus. Functionally, pro-apoptotic protein capable of selectively inducing apoptosis in cancer cells, sensitizing the cells to diverse apoptotic stimuli and causing regression of tumors in animal models. Induces apoptosis in certain cancer cells by activation of the Fas prodeath pathway and coparallel inhibition of NF-kappa-B transcriptional activity. Inhibits the transcriptional activation and augments the transcriptional repression mediated by WT1. Down-regulates the anti-apoptotic protein BCL2 via its interaction with WT1. Also seems to be a transcriptional repressor by itself. May be directly involved in regulating the amyloid precursor protein (APP) cleavage activity of BACE1. This Rattus norvegicus (Rat) protein is PRKC apoptosis WT1 regulator protein (Pawr).